Here is a 436-residue protein sequence, read N- to C-terminus: 3-ketoacyl-CoA thiolase (436 aa).

C99 serves as the catalytic Acyl-thioester intermediate. Residues H392 and C422 each act as proton acceptor in the active site.

Belongs to the thiolase-like superfamily. Thiolase family. Heterotetramer of two alpha chains (FadJ) and two beta chains (FadI).

It is found in the cytoplasm. It catalyses the reaction an acyl-CoA + acetyl-CoA = a 3-oxoacyl-CoA + CoA. It functions in the pathway lipid metabolism; fatty acid beta-oxidation. Catalyzes the final step of fatty acid oxidation in which acetyl-CoA is released and the CoA ester of a fatty acid two carbons shorter is formed. This is 3-ketoacyl-CoA thiolase from Klebsiella pneumoniae (strain 342).